We begin with the raw amino-acid sequence, 166 residues long: Sec-independent protein translocase protein TatB (166 aa).

A helical transmembrane segment spans residues Phe2–Gly22. Residues Ser69–Gly166 form a disordered region. 2 stretches are compositionally biased toward polar residues: residues Gln88 to Tyr97 and Gln112 to Asn132. Residues Pro133–Ser153 show a composition bias toward low complexity. The segment covering Gly155–Gly166 has biased composition (polar residues).

It belongs to the TatB family. The Tat system comprises two distinct complexes: a TatABC complex, containing multiple copies of TatA, TatB and TatC subunits, and a separate TatA complex, containing only TatA subunits. Substrates initially bind to the TatABC complex, which probably triggers association of the separate TatA complex to form the active translocon.

It is found in the cell inner membrane. Functionally, part of the twin-arginine translocation (Tat) system that transports large folded proteins containing a characteristic twin-arginine motif in their signal peptide across membranes. Together with TatC, TatB is part of a receptor directly interacting with Tat signal peptides. TatB may form an oligomeric binding site that transiently accommodates folded Tat precursor proteins before their translocation. The protein is Sec-independent protein translocase protein TatB of Shewanella baltica (strain OS223).